We begin with the raw amino-acid sequence, 371 residues long: Carnitine monooxygenase oxygenase subunit (371 aa).

The Rieske domain occupies 44–152 (WICVAHGSEL…VEEYAGFVFI (109 aa)). [2Fe-2S] cluster-binding residues include C86, H88, C106, and H109. Fe cation is bound by residues H208, H213, and D323.

The protein belongs to the bacterial ring-hydroxylating dioxygenase alpha subunit family. CntA subfamily. In terms of assembly, composed of an oxygenase subunit and a reductase subunit. Requires [2Fe-2S] cluster as cofactor. The cofactor is Fe cation.

The catalysed reaction is (R)-carnitine + NADH + O2 + H(+) = (3R)-3-hydroxy-4-oxobutanoate + trimethylamine + NAD(+) + H2O. The enzyme catalyses (R)-carnitine + NADPH + O2 + H(+) = (3R)-3-hydroxy-4-oxobutanoate + trimethylamine + NADP(+) + H2O. The protein operates within amine and polyamine metabolism; carnitine metabolism. Inhibited by EDTA. Functionally, converts carnitine to trimethylamine and malic semialdehyde. Acts on both enantiomers. The sequence is that of Carnitine monooxygenase oxygenase subunit from Acinetobacter pittii (strain PHEA-2).